Consider the following 371-residue polypeptide: Anhydro-N-acetylmuramic acid kinase (371 aa).

12–20 (GTVLDGNID) is a binding site for ATP.

The protein belongs to the anhydro-N-acetylmuramic acid kinase family.

It catalyses the reaction 1,6-anhydro-N-acetyl-beta-muramate + ATP + H2O = N-acetyl-D-muramate 6-phosphate + ADP + H(+). The protein operates within amino-sugar metabolism; 1,6-anhydro-N-acetylmuramate degradation. It participates in cell wall biogenesis; peptidoglycan recycling. Its function is as follows. Catalyzes the specific phosphorylation of 1,6-anhydro-N-acetylmuramic acid (anhMurNAc) with the simultaneous cleavage of the 1,6-anhydro ring, generating MurNAc-6-P. Is required for the utilization of anhMurNAc either imported from the medium or derived from its own cell wall murein, and thus plays a role in cell wall recycling. The polypeptide is Anhydro-N-acetylmuramic acid kinase (Rhizobium rhizogenes (strain K84 / ATCC BAA-868) (Agrobacterium radiobacter)).